We begin with the raw amino-acid sequence, 254 residues long: Type III pantothenate kinase (254 aa).

7-14 (DVGNTRLK) provides a ligand contact to ATP. Substrate contacts are provided by residues Y96 and 103 to 106 (GSDR). The active-site Proton acceptor is the D105. T133 is a binding site for ATP. T183 lines the substrate pocket.

It belongs to the type III pantothenate kinase family. In terms of assembly, homodimer. The cofactor is NH4(+). It depends on K(+) as a cofactor.

It localises to the cytoplasm. The catalysed reaction is (R)-pantothenate + ATP = (R)-4'-phosphopantothenate + ADP + H(+). It participates in cofactor biosynthesis; coenzyme A biosynthesis; CoA from (R)-pantothenate: step 1/5. Functionally, catalyzes the phosphorylation of pantothenate (Pan), the first step in CoA biosynthesis. This chain is Type III pantothenate kinase, found in Paracidovorax citrulli (strain AAC00-1) (Acidovorax citrulli).